Here is a 426-residue protein sequence, read N- to C-terminus: Serine--tRNA ligase (426 aa).

230-232 serves as a coordination point for L-serine; it reads TAE. Residue 261–263 coordinates ATP; it reads RSE. Glu-284 provides a ligand contact to L-serine. 348–351 contacts ATP; sequence EISS. Ser-384 serves as a coordination point for L-serine.

The protein belongs to the class-II aminoacyl-tRNA synthetase family. Type-1 seryl-tRNA synthetase subfamily. As to quaternary structure, homodimer. The tRNA molecule binds across the dimer.

Its subcellular location is the cytoplasm. The catalysed reaction is tRNA(Ser) + L-serine + ATP = L-seryl-tRNA(Ser) + AMP + diphosphate + H(+). It catalyses the reaction tRNA(Sec) + L-serine + ATP = L-seryl-tRNA(Sec) + AMP + diphosphate + H(+). It functions in the pathway aminoacyl-tRNA biosynthesis; selenocysteinyl-tRNA(Sec) biosynthesis; L-seryl-tRNA(Sec) from L-serine and tRNA(Sec): step 1/1. Catalyzes the attachment of serine to tRNA(Ser). Is also able to aminoacylate tRNA(Sec) with serine, to form the misacylated tRNA L-seryl-tRNA(Sec), which will be further converted into selenocysteinyl-tRNA(Sec). The protein is Serine--tRNA ligase of Erythrobacter litoralis (strain HTCC2594).